Reading from the N-terminus, the 240-residue chain is Sec-independent protein translocase protein TatC (240 aa).

Helical transmembrane passes span Ile15 to Val35, Leu61 to Leu81, Leu103 to Leu123, Phe152 to Val172, Phe191 to Leu211, and Met212 to Arg232.

The protein belongs to the TatC family. Forms a complex with TatA.

The protein localises to the cell inner membrane. In terms of biological role, part of the twin-arginine translocation (Tat) system that transports large folded proteins containing a characteristic twin-arginine motif in their signal peptide across membranes. The sequence is that of Sec-independent protein translocase protein TatC from Aquifex aeolicus (strain VF5).